The following is a 221-amino-acid chain: Putative N-acetylmannosamine-6-phosphate 2-epimerase (221 aa).

It belongs to the NanE family.

It catalyses the reaction an N-acyl-D-glucosamine 6-phosphate = an N-acyl-D-mannosamine 6-phosphate. Its pathway is amino-sugar metabolism; N-acetylneuraminate degradation; D-fructose 6-phosphate from N-acetylneuraminate: step 3/5. In terms of biological role, converts N-acetylmannosamine-6-phosphate (ManNAc-6-P) to N-acetylglucosamine-6-phosphate (GlcNAc-6-P). This is Putative N-acetylmannosamine-6-phosphate 2-epimerase from Clostridium perfringens (strain SM101 / Type A).